The chain runs to 567 residues: uncharacterized protein (567 aa).

6 consecutive transmembrane segments (helical) span residues 20–40, 69–89, 95–115, 126–146, 168–188, and 528–548; these read FTILAFFYISSIFFLLCSGVL, SLETAWYLISAVAVFIASVFI, AYLTLLAITWIVLTITDVALI, ILLNILYNLFGAILLSLFMCL, IPLVSAIIIAILITAVIYLLF, and IFGSSIMDILKYIFGLGLLAI.

The protein localises to the cell membrane. This is an uncharacterized protein from Escherichia coli (strain K12).